A 286-amino-acid polypeptide reads, in one-letter code: Cytotoxin (286 aa).

Positions 267–286 (TFYNYASLVPDLETRVRSAE) are excised as a propeptide.

The protein belongs to the aerolysin family.

The protein localises to the secreted. Functionally, cytotoxin is thought to form hydrophilic pores in cell membranes. This Pseudomonas aeruginosa protein is Cytotoxin (ctx).